Here is a 252-residue protein sequence, read N- to C-terminus: MANLGCWMLVLFVATWSDLGLCKKRPKPGGWNTGGSRYPGQGSPGGNLYPPQGGGWGQPHGGGWGQPHGGGWGQPHGGSWGQPHGGGWGQGGGTHNQWNKPSKPKTSMKHVAGAAAAGAVVGGLGGYMLGSAMSRPLIHFGNDYEDRYYRENMYRYPNQVYYRPVDQYSNQNNFVHDCVNITIKQHTVTTTTKGENFTETDVKMMERVVEQMCITQYERESQAYYQRGSSMVLFSSPPVILLISFLIFLIVG.

The first 22 residues, 1 to 22 (MANLGCWMLVLFVATWSDLGLC), serve as a signal peptide directing secretion. The interaction with ADGRG6 stretch occupies residues 23–38 (KKRPKPGGWNTGGSRY). The segment at 23–229 (KKRPKPGGWN…ESQAYYQRGS (207 aa)) is interaction with GRB2, ERI3 and SYN1. Residues 26–106 (PKPGGWNTGG…QWNKPSKPKT (81 aa)) form a disordered region. 5 repeat units span residues 51-58 (PQGGGWGQ), 59-66 (PHGGGWGQ), 67-74 (PHGGGWGQ), 75-82 (PHGGSWGQ), and 83-90 (PHGGGWGQ). Residues 51 to 90 (PQGGGWGQPHGGGWGQPHGGGWGQPHGGSWGQPHGGGWGQ) are 5 X 8 AA tandem repeats of P-H-G-G-G-W-G-Q. The span at 52 to 94 (QGGGWGQPHGGGWGQPHGGGWGQPHGGSWGQPHGGGWGQGGGT) shows a compositional bias: gly residues. Residues histidine 60, glycine 61, glycine 62, histidine 68, glycine 69, glycine 70, histidine 76, glycine 77, glycine 78, histidine 84, glycine 85, and glycine 86 each coordinate Cu(2+). An intrachain disulfide couples cysteine 178 to cysteine 213. Asparagine 180 and asparagine 196 each carry an N-linked (GlcNAc...) asparagine glycan. Serine 229 carries the GPI-anchor amidated serine lipid modification. Positions 230–252 (SMVLFSSPPVILLISFLIFLIVG) are cleaved as a propeptide — removed in mature form.

The protein belongs to the prion family. Monomer and homodimer. Has a tendency to aggregate into amyloid fibrils containing a cross-beta spine, formed by a steric zipper of superposed beta-strands. Soluble oligomers may represent an intermediate stage on the path to fibril formation. Copper binding may promote oligomerization. Interacts with GRB2, APP, ERI3/PRNPIP and SYN1. Mislocalized cytosolically exposed PrP interacts with MGRN1; this interaction alters MGRN1 subcellular location and causes lysosomal enlargement. Interacts with APP. Interacts with KIAA1191. Interacts with ADGRG6.

It is found in the cell membrane. Its subcellular location is the golgi apparatus. Its function is as follows. Its primary physiological function is unclear. May play a role in neuronal development and synaptic plasticity. May be required for neuronal myelin sheath maintenance. May promote myelin homeostasis through acting as an agonist for ADGRG6 receptor. May play a role in iron uptake and iron homeostasis. Soluble oligomers are toxic to cultured neuroblastoma cells and induce apoptosis (in vitro). Association with GPC1 (via its heparan sulfate chains) targets PRNP to lipid rafts. Also provides Cu(2+) or Zn(2+) for the ascorbate-mediated GPC1 deaminase degradation of its heparan sulfate side chains. This Sapajus apella (Brown-capped capuchin) protein is Major prion protein (PRNP).